The chain runs to 285 residues: ATP phosphoribosyltransferase (285 aa).

Belongs to the ATP phosphoribosyltransferase family. Long subfamily. The cofactor is Mg(2+).

It localises to the cytoplasm. The enzyme catalyses 1-(5-phospho-beta-D-ribosyl)-ATP + diphosphate = 5-phospho-alpha-D-ribose 1-diphosphate + ATP. It functions in the pathway amino-acid biosynthesis; L-histidine biosynthesis; L-histidine from 5-phospho-alpha-D-ribose 1-diphosphate: step 1/9. With respect to regulation, feedback inhibited by histidine. Its function is as follows. Catalyzes the condensation of ATP and 5-phosphoribose 1-diphosphate to form N'-(5'-phosphoribosyl)-ATP (PR-ATP). Has a crucial role in the pathway because the rate of histidine biosynthesis seems to be controlled primarily by regulation of HisG enzymatic activity. The chain is ATP phosphoribosyltransferase from Sulfurisphaera tokodaii (strain DSM 16993 / JCM 10545 / NBRC 100140 / 7) (Sulfolobus tokodaii).